The chain runs to 313 residues: uncharacterized protein (313 aa).

6 helical membrane-spanning segments follow: residues Ala-16–Ala-36, Phe-106–Phe-126, Phe-155–Phe-175, Leu-208–Phe-228, Leu-233–Ala-253, and Phe-286–Phe-306.

The protein resides in the cell membrane. This is an uncharacterized protein from Bacillus subtilis (strain 168).